The chain runs to 290 residues: Purine nucleoside phosphorylase (290 aa).

Residue 68–69 (RN) coordinates phosphate. Residue Met-204 participates in substrate binding. Thr-205 contributes to the phosphate binding site.

It belongs to the PNP/MTAP phosphorylase family. MTAP subfamily. In terms of assembly, homotrimer.

It localises to the cytoplasm. The protein resides in the nucleus. The catalysed reaction is a purine D-ribonucleoside + phosphate = a purine nucleobase + alpha-D-ribose 1-phosphate. The protein operates within purine metabolism; purine nucleoside salvage. Its function is as follows. Purine nucleoside phosphorylase involved in purine salvage. The protein is Purine nucleoside phosphorylase of Drosophila melanogaster (Fruit fly).